The following is an 872-amino-acid chain: Rho guanine nucleotide exchange factor scd1 (872 aa).

Positions 1 to 29 (MAYFQDRKTSSRSLPSYINHSTQNLVGPR) are disordered. Polar residues predominate over residues 11–25 (SRSLPSYINHSTQNL). One can recognise a Calponin-homology (CH) domain in the interval 82-198 (DSIHREALNS…TIELLLKKYE (117 aa)). In terms of domain architecture, DH spans 228–402 (SGRRVTAELY…VRVANQVNET (175 aa)). The region spanning 426-547 (SLQYFGQLLV…WMSVLNRLLW (122 aa)) is the PH domain. Disordered stretches follow at residues 553-667 (SPKD…STAS) and 743-765 (MKSD…STST). Residues 560–584 (AASTPANPVYNRSSSQTSKGYNSSD) are compositionally biased toward polar residues. The residue at position 583 (Ser583) is a Phosphoserine. A compositionally biased stretch (low complexity) spans 599-616 (SPTSISSPSSKSSPFTKT). Over residues 617-633 (TSKDTKSATTTDERPSD) the composition is skewed to basic and acidic residues. Low complexity-rich tracts occupy residues 645-667 (TSSL…STAS) and 748-765 (SLLP…STST). In terms of domain architecture, PB1 spans 772–859 (TTNVKIRLRL…FELMDPVHNK (88 aa)).

As to quaternary structure, scd1, scd2, cdc42, and ras1, in its GTP-bound state, act cooperatively to form a protein complex. Interacts with moe1 and cdc42.

The protein localises to the nucleus. It is found in the cytoplasm. In terms of biological role, required for mating and morphogenesis. May contain a cryptic binding site for cdc42 that is enhanced by binding Ras. Interacts directly with scd2. Promotes the exchange of cdc42-bound GDP by GTP. Involved in septation and stimulates the elongation of conjugation tubes. The chain is Rho guanine nucleotide exchange factor scd1 (scd1) from Schizosaccharomyces pombe (strain 972 / ATCC 24843) (Fission yeast).